The following is a 463-amino-acid chain: Immune-associated nucleotide-binding protein 10 (463 aa).

An AIG1-type G domain is found at 3-211 (EPIKNIVLVG…YTYQLHRKIK (209 aa)). The G1 stretch occupies residues 12–19 (GRTGNGKS). GTP is bound by residues 12–20 (GRTGNGKSS) and Ser33. Residues 39–43 (GVTMI) are G2. Residues 61 to 64 (DTPG) form a G3 region. The interval 131-134 (TGGD) is G4. The G5 stretch occupies residues 170–172 (DNK). Asn171 serves as a coordination point for GTP. Residues 173–308 (SKDEKKKVEQ…KQLIAQANRM (136 aa)) adopt a coiled-coil conformation.

It belongs to the TRAFAC class TrmE-Era-EngA-EngB-Septin-like GTPase superfamily. AIG1/Toc34/Toc159-like paraseptin GTPase family. IAN subfamily. As to expression, expressed in radicles of the germinating seeds.

The sequence is that of Immune-associated nucleotide-binding protein 10 from Arabidopsis thaliana (Mouse-ear cress).